Here is a 462-residue protein sequence, read N- to C-terminus: Lysophospholipid acyltransferase 1 (462 aa).

Helical transmembrane passes span 9–29 (SIGVSVAVLRFLLCFVATIPV), 52–72 (FLSYLSFGFSSNLHFLVPMTI), 84–104 (CGIITFFLGFAYLIGCHVFYM), 158–178 (SLIEYFGYCLCCGSHFAGPVY), 211–231 (AILQAAICMALYLYLVPQYPL), 263–283 (YFIWSISEASIIISGLGFSGW), 353–373 (AVWHGLYPGYMMFFVQSALMI), 396–416 (IMVFINFLYTVLVLNYSAVGF), and 431–451 (VYYIGTIIPVGLILLSYVVPA). The active site involves His356.

This sequence belongs to the membrane-bound acyltransferase family. Expressed in roots, rosette leaves, petals, stigma, chalazal endosperm of developing seeds and vascular bundles of siliques.

It localises to the endoplasmic reticulum membrane. It catalyses the reaction a 1-acyl-sn-glycero-3-phosphocholine + an acyl-CoA = a 1,2-diacyl-sn-glycero-3-phosphocholine + CoA. It carries out the reaction 1-(9Z-octadecenoyl)-sn-glycero-3-phosphocholine + (9Z)-octadecenoyl-CoA = 1,2-di-(9Z-octadecenoyl)-sn-glycero-3-phosphocholine + CoA. The enzyme catalyses 1-(9Z-octadecenoyl)-sn-glycero-3-phosphocholine + (9Z,12Z)-octadecadienoyl-CoA = 1-(9Z)-octadecenoyl-2-(9Z,12Z)-octadecadienoyl-sn-glycero-3-phosphocholine + CoA. The catalysed reaction is (9Z,12Z,15Z)-octadecatrienoyl-CoA + 1-(9Z-octadecenoyl)-sn-glycero-3-phosphocholine = 1-(9Z-octadecaenoyl)-2-(9Z,12Z,15Z-octadecatrienoyl)-sn-glycero-3-phosphocholine + CoA. It catalyses the reaction a 1-acyl-sn-glycero-3-phosphoethanolamine + an acyl-CoA = a 1,2-diacyl-sn-glycero-3-phosphoethanolamine + CoA. It carries out the reaction a 1-acyl-sn-glycero-3-phospho-L-serine + an acyl-CoA = a 1,2-diacyl-sn-glycero-3-phospho-L-serine + CoA. Its function is as follows. Lysophospholipid acyltransferase with broad specificity. Mediates the conversion of lysophosphatidylethanolamine (1-acyl-sn-glycero-3-phosphoethanolamine or LPE) into phosphatidylethanolamine (1,2-diacyl-sn-glycero-3-phosphoethanolamine or PE) (LPEAT activity). Catalyzes the acylation of lysophosphatidylserine (1-acyl-2-hydroxy-sn-glycero-3-phospho-L-serine or LPS) into phosphatidylserine (1,2-diacyl-sn-glycero-3-phospho-L-serine or PS) (LPSAT activity). Can convert lysophosphatidylcholine (1-acyl-sn-glycero-3-phosphocholine or LPC) into phosphatidylcholine (1,2-diacyl-sn-glycero-3-phosphocholine or PC) (LPCAT activity). Exhibits preference for C18-unsaturated acyl-CoA when transferring an acyl group to lysophosphatidylcholine. Can also utilize lysophosphatidylglycerol (LPG) as substrate in vitro. Has neither activity towards lysophosphatidic acid (LPA) nor lysophosphatidylinositol (LPI). Lysophospholipid acyltransferases catalyze the reacylation step of the phospholipid remodeling pathway also known as the Lands cycle. The primary function of the Lands cycle is to provide a route for acyl remodeling to modify fatty acid (FA) composition of phospholipids derived from the Kennedy pathway. Is involved in PC acyl editing and phosphocholine headgroup exchange between PC and diacylglycerols. This processes control the majority of acyl fluxes through PC to provide polyunsaturated fatty acids for triacylglycerols synthesis in seeds. Involved with LPCAT2 in the direct incorporation of newly synthesized fatty acids exported form the chloroplast into PC through acyl editing. In Arabidopsis thaliana (Mouse-ear cress), this protein is Lysophospholipid acyltransferase 1.